A 152-amino-acid polypeptide reads, in one-letter code: SXP/RAL-2 family protein Ani s 5 (152 aa).

A signal peptide spans 1–18; the sequence is MKTLIVAALFCTIGMALA. 4 necessary for IgE-binding regions span residues 25–42, 49–54, 58–66, and 103–120; these read PPFLAGAPQDVVKAFFEL, KTDPEI, LDAWVDTLG, and KKADAELSKIAEDDSLNG. IgG4-binding stretches follow at residues 49 to 68 and 118 to 137; these read KTDPEIEKDLDAWVDTLGGD and LNGIQKAQKIQAIYKTLPQS. The interval 127–146 is igE-binding and IgG4-binding; the sequence is IQAIYKTLPQSVKDELEKGI.

Belongs to the SXP/RAL-2 family. Monomer. As to expression, excretory gland, ventriculus, and the luminal epithelium of the intestine of the larvae.

Its subcellular location is the secreted. This chain is SXP/RAL-2 family protein Ani s 5, found in Anisakis simplex (Herring worm).